The sequence spans 384 residues: Zinc finger protein GLIS2 homolog (384 aa).

Residues Phe128–His153 form a C2H2-type 1 zinc finger. The segment at Tyr163–His190 adopts a C2H2-type 2; degenerate zinc-finger fold. 3 consecutive C2H2-type zinc fingers follow at residues His196–His218, Tyr224–His248, and Tyr254–His280. The disordered stretch occupies residues Ser321 to Lys343.

The protein belongs to the GLI C2H2-type zinc-finger protein family.

The protein resides in the nucleus. In terms of biological role, transcription factor which represses a set of lipase genes involved in fat catabolism. The polypeptide is Zinc finger protein GLIS2 homolog (sug) (Drosophila melanogaster (Fruit fly)).